The sequence spans 543 residues: Gap junction alpha-10 protein (543 aa).

Residues 1–16 lie on the Cytoplasmic side of the membrane; it reads MGDWNLLGGILEEVHS. Residues 17 to 37 traverse the membrane as a helical segment; sequence HSTIVGKIWLTILFIFRMLVL. Over 38 to 76 the chain is Extracellular; it reads RVAAEDVWDDEQSAFACNTRQPGCNNICYDDAFPISLIR. Residues 77–97 form a helical membrane-spanning segment; the sequence is FWVLQIIFVSSPSLVYMGHAL. The Cytoplasmic portion of the chain corresponds to 98-165; the sequence is YRLRAFEKDR…TYVLHILTRS (68 aa). A helical membrane pass occupies residues 166–186; that stretch reads VLEVGFMIGQYILYGFQMHPL. The Extracellular portion of the chain corresponds to 187-209; the sequence is YKCTQPPCPNAVDCFVSRPTEKT. Residues 210-230 traverse the membrane as a helical segment; sequence IFMLFMHSIAAISLLLNILEI. The Cytoplasmic portion of the chain corresponds to 231 to 543; that stretch reads FHLGIRKIMR…HSIHSVKFNS (313 aa). 2 disordered regions span residues 306-359 and 379-424; these read PQPR…SSFG and PSFA…DRSR. A compositionally biased stretch (basic and acidic residues) spans 317 to 328; sequence NGKKDWSEKDQH. The span at 344-359 shows a compositional bias: polar residues; it reads AGNQHLGQQSDHSSFG. The segment covering 400 to 413 has biased composition (basic and acidic residues); it reads TDLHSHCRDSEGSM.

This sequence belongs to the connexin family. Alpha-type (group II) subfamily. As to quaternary structure, a connexon is composed of a hexamer of connexins. As to expression, expressed in skeletal muscle and heart.

It localises to the cell membrane. The protein localises to the cell junction. It is found in the gap junction. Its function is as follows. One gap junction consists of a cluster of closely packed pairs of transmembrane channels, the connexons, through which materials of low MW diffuse from one cell to a neighboring cell. Involved in tracer coupling between horizontal cells of the retina. May play a role in the regulation of horizontal cell patterning. The protein is Gap junction alpha-10 protein (GJA10) of Homo sapiens (Human).